The primary structure comprises 95 residues: Fungal defensin plectasin (95 aa).

An N-terminal signal peptide occupies residues 1–23 (MQFTTILSIGITVFGLLNTGAFA). A propeptide spanning residues 24–55 (APQPVPEAYAVSDPEAHPDDFAGMDANQLQKR) is cleaved from the precursor. Beta-D-GlcNAc-(1-&gt;4)-Mur2Ac(oyl-L-Ala-gamma-D-Glu-L-Lys-D-Ala-D-Ala)-di-trans,octa-cis-undecaprenyl diphosphate contacts are provided by phenylalanine 57, glycine 58, and cysteine 59. 3 disulfides stabilise this stretch: cysteine 59–cysteine 85, cysteine 70–cysteine 92, and cysteine 74–cysteine 94. Residues 61 to 64 (GPWD) are binds to membrane interface. Beta-D-GlcNAc-(1-&gt;4)-Mur2Ac(oyl-L-Ala-gamma-D-Glu-L-Lys-D-Ala-D-Ala)-di-trans,octa-cis-undecaprenyl diphosphate-binding residues include aspartate 67, histidine 73, tyrosine 84, alanine 86, glycine 88, cysteine 92, and lysine 93. The tract at residues 86–92 (AKGGFVC) is binds to membrane interface.

It belongs to the invertebrate defensin family. Type 2 subfamily.

It localises to the secreted. The protein localises to the host cell membrane. In terms of biological role, antimicrobial peptide that potently acts against several species of Gram-positive bacteria. It selectively inhibits peptidoglycan biosynthesis through complex formation with the cell wall precursor lipid II (1:1 molar ratio) thus inhibiting cell wall synthesis. It does not disrupt cell membranes. Is especially active against numerous clinical isolates of S.pneumoniae, including all 90 different serotypes and isolates resistant to clinically used antibiotics. In vitro, shows considerable selectivity for bacteria over mammalian cells. The peptide synthesized in D-amino acids does not show antibacterial activity. In vitro, acts on voltage-gated potassium channels by moderately inhibiting mammalian Kv1.3/KCNA3 (IC(50)=2.8 uM), and moderately inhibiting others potassium channels. The polypeptide is Fungal defensin plectasin (DEF) (Pseudoplectania nigrella (Ebony cup)).